Reading from the N-terminus, the 291-residue chain is Foldase protein PrsA 2 (291 aa).

A signal peptide spans 1 to 20; it reads MKKKLILGLVMMMALFSLAA. C21 carries the N-palmitoyl cysteine lipid modification. C21 carries S-diacylglycerol cysteine lipidation. Residues 135–226 enclose the PpiC domain; that stretch reads QPDITVSHIL…YGYHIIQMDK (92 aa).

This sequence belongs to the PrsA family.

The protein localises to the cell membrane. The catalysed reaction is [protein]-peptidylproline (omega=180) = [protein]-peptidylproline (omega=0). Its function is as follows. Plays a major role in protein secretion by helping the post-translocational extracellular folding of several secreted proteins. The polypeptide is Foldase protein PrsA 2 (prsA2) (Listeria innocua serovar 6a (strain ATCC BAA-680 / CLIP 11262)).